The following is a 150-amino-acid chain: Catabolic 3-dehydroquinase 2 (150 aa).

Tyrosine 23 (proton acceptor) is an active-site residue. The substrate site is built by asparagine 74, histidine 80, and aspartate 87. The active-site Proton donor is histidine 100. Residues isoleucine 101–threonine 102 and arginine 111 each bind substrate.

This sequence belongs to the type-II 3-dehydroquinase family. As to quaternary structure, homododecamer. Adopts a ring-like structure, composed of an arrangement of two hexameric rings stacked on top of one another.

The catalysed reaction is 3-dehydroquinate = 3-dehydroshikimate + H2O. It participates in aromatic compound metabolism; 3,4-dihydroxybenzoate biosynthesis; 3,4-dihydroxybenzoate from 3-dehydroquinate: step 1/2. Is involved in the catabolism of quinate. Allows the utilization of quinate as carbon source via the beta-ketoadipate pathway. This chain is Catabolic 3-dehydroquinase 2, found in Aspergillus flavus (strain ATCC 200026 / FGSC A1120 / IAM 13836 / NRRL 3357 / JCM 12722 / SRRC 167).